The sequence spans 196 residues: GTP cyclohydrolase-2 (196 aa).

A GTP-binding site is contributed by 49–53 (RVHSE). The Zn(2+) site is built by Cys54, Cys65, and Cys67. GTP is bound by residues Gln70, 92–94 (EGR), and Thr114. Catalysis depends on Asp126, which acts as the Proton acceptor. Residue Arg128 is the Nucleophile of the active site. GTP-binding residues include Thr149 and Lys154.

This sequence belongs to the GTP cyclohydrolase II family. In terms of assembly, homodimer. Zn(2+) is required as a cofactor.

It carries out the reaction GTP + 4 H2O = 2,5-diamino-6-hydroxy-4-(5-phosphoribosylamino)-pyrimidine + formate + 2 phosphate + 3 H(+). It participates in cofactor biosynthesis; riboflavin biosynthesis; 5-amino-6-(D-ribitylamino)uracil from GTP: step 1/4. In terms of biological role, catalyzes the conversion of GTP to 2,5-diamino-6-ribosylamino-4(3H)-pyrimidinone 5'-phosphate (DARP), formate and pyrophosphate. This is GTP cyclohydrolase-2 from Enterobacter sp. (strain 638).